Consider the following 229-residue polypeptide: Ribonuclease 3 (229 aa).

The RNase III domain maps to 8–130; sequence LTELEKIVGY…IIGAIYLDSD (123 aa). Position 43 (glutamate 43) interacts with Mg(2+). Aspartate 47 is a catalytic residue. Mg(2+) is bound by residues aspartate 116 and glutamate 119. Residue glutamate 119 is part of the active site. A DRBM domain is found at 157–227; it reads DPKTRLQELL…ATAALEHLQE (71 aa). The segment at 201–229 is disordered; that stretch reads SPFKGTGTSRRKAEQAAATAALEHLQESA.

The protein belongs to the ribonuclease III family. As to quaternary structure, homodimer. Mg(2+) serves as cofactor.

The protein resides in the cytoplasm. The catalysed reaction is Endonucleolytic cleavage to 5'-phosphomonoester.. Functionally, digests double-stranded RNA. Involved in the processing of primary rRNA transcript to yield the immediate precursors to the large and small rRNAs (23S and 16S). Processes some mRNAs, and tRNAs when they are encoded in the rRNA operon. Processes pre-crRNA and tracrRNA of type II CRISPR loci if present in the organism. The polypeptide is Ribonuclease 3 (Idiomarina loihiensis (strain ATCC BAA-735 / DSM 15497 / L2-TR)).